The primary structure comprises 304 residues: Homoserine kinase (304 aa).

An ATP-binding site is contributed by 90–100 (PLARGLGSSAS).

This sequence belongs to the GHMP kinase family. Homoserine kinase subfamily.

Its subcellular location is the cytoplasm. The catalysed reaction is L-homoserine + ATP = O-phospho-L-homoserine + ADP + H(+). It functions in the pathway amino-acid biosynthesis; L-threonine biosynthesis; L-threonine from L-aspartate: step 4/5. Functionally, catalyzes the ATP-dependent phosphorylation of L-homoserine to L-homoserine phosphate. This Staphylococcus aureus (strain MRSA252) protein is Homoserine kinase.